The primary structure comprises 739 residues: ABC transporter G family member 20 (739 aa).

In terms of domain architecture, ABC transporter spans 88 to 351; sequence LSFKDLTYSV…FSEFGHPIPE (264 aa). ATP is bound at residue 144-151; sequence GASGSGKS. The region spanning 433–643 is the ABC transmembrane type-2 domain; that stretch reads TEMLVIGKRS…PYEGVLQNEF (211 aa). Transmembrane regions (helical) follow at residues 452 to 472, 487 to 507, 528 to 548, 563 to 583, 593 to 613, and 712 to 732; these read LFGI…TIFW, FFAF…PVFL, VLAH…AFAA, FLFF…FVTF, IGFT…GFFI, and LWIT…TLLI.

It belongs to the ABC transporter superfamily. ABCG family. Eye pigment precursor importer (TC 3.A.1.204) subfamily.

It localises to the membrane. This is ABC transporter G family member 20 (ABCG20) from Arabidopsis thaliana (Mouse-ear cress).